The chain runs to 355 residues: UDP-N-acetylglucosamine--N-acetylmuramyl-(pentapeptide) pyrophosphoryl-undecaprenol N-acetylglucosamine transferase (355 aa).

UDP-N-acetyl-alpha-D-glucosamine-binding positions include 14 to 16 (TGG), N126, R164, S190, I243, 262 to 267 (ALTVAE), and Q288.

Belongs to the glycosyltransferase 28 family. MurG subfamily.

It is found in the cell inner membrane. It catalyses the reaction di-trans,octa-cis-undecaprenyl diphospho-N-acetyl-alpha-D-muramoyl-L-alanyl-D-glutamyl-meso-2,6-diaminopimeloyl-D-alanyl-D-alanine + UDP-N-acetyl-alpha-D-glucosamine = di-trans,octa-cis-undecaprenyl diphospho-[N-acetyl-alpha-D-glucosaminyl-(1-&gt;4)]-N-acetyl-alpha-D-muramoyl-L-alanyl-D-glutamyl-meso-2,6-diaminopimeloyl-D-alanyl-D-alanine + UDP + H(+). Its pathway is cell wall biogenesis; peptidoglycan biosynthesis. Its function is as follows. Cell wall formation. Catalyzes the transfer of a GlcNAc subunit on undecaprenyl-pyrophosphoryl-MurNAc-pentapeptide (lipid intermediate I) to form undecaprenyl-pyrophosphoryl-MurNAc-(pentapeptide)GlcNAc (lipid intermediate II). This chain is UDP-N-acetylglucosamine--N-acetylmuramyl-(pentapeptide) pyrophosphoryl-undecaprenol N-acetylglucosamine transferase, found in Psychromonas ingrahamii (strain DSM 17664 / CCUG 51855 / 37).